A 959-amino-acid chain; its full sequence is Probable serine/threonine-protein kinase DDB_G0291664 (959 aa).

The segment at 154 to 213 (QQQQQQQLTPPPSPPLLPIPQPPAQNEEQQLTQPPSIPPPQQKQIKIQKSDRGTQVKSIT) is disordered. Pro residues predominate over residues 162–176 (TPPPSPPLLPIPQPP). ANK repeat units lie at residues 294-324 (KGET…CMGI) and 333-362 (LNKN…PLKM). Positions 482-762 (IDFHTQIGSA…EVGIIETEFL (281 aa)) constitute a Protein kinase domain. ATP contacts are provided by residues 488-496 (IGSAGNASV) and lysine 509. The active-site Proton acceptor is aspartate 610. The tract at residues 904–959 (NNINNNNNNNNNCNNSKKFKTTSESTSALGSDASSSSSPSSSSPSPKYSASIYHHQ) is disordered.

The protein belongs to the protein kinase superfamily. Ser/Thr protein kinase family.

The catalysed reaction is L-seryl-[protein] + ATP = O-phospho-L-seryl-[protein] + ADP + H(+). It catalyses the reaction L-threonyl-[protein] + ATP = O-phospho-L-threonyl-[protein] + ADP + H(+). This is Probable serine/threonine-protein kinase DDB_G0291664 from Dictyostelium discoideum (Social amoeba).